The primary structure comprises 462 residues: MTRLSFTVLIFLAAYFGSNIRPNVATLDPKTVCYYESWVHWRQGDGKMDPEDIDTSLCSHIVYSYFGIDASSHEIKLLDQYLMITLHDMEHFTKHKGNAKAMIAVGGASMSDQFSKTAAVEHYRETFVVSTIDLMTKYGFDGVMIDWSGMQAKDSDNFVKLLDKFDEKFAQTSFVMGVTLPATIASYDNYNIPAISNYVDFMNVLTLDYDGPWAYTVGHASALPEQLKTLEAYNKRGAPRHKMVMAVPFFARTWILEKMDKQDVGDKASGPGPKGQFTQTPGFLSYNELCVQIQAETNAFSITRDHDNTAIYAVYVHDNHAEWISFEDRHTLGDKARNITEQGYGGMSVYTLSNEDVHGVCGDKNPLLHAINSNYFRGIVTEPTVVTVTPVTHTTEHVTDIPGVFHCHQEGFFRDKTYCAKYYECKKGDFGLEQTVHHCPNHSQAFDEVSRTCVDHAKIPGC.

An N-terminal signal peptide occupies residues 1 to 25 (MTRLSFTVLIFLAAYFGSNIRPNVA). Positions 29-378 (PKTVCYYESW…HAINSNYFRG (350 aa)) constitute a GH18 domain. Cysteine 33 and cysteine 58 are joined by a disulfide. N-linked (GlcNAc...) asparagine glycosylation is found at asparagine 338 and asparagine 441. The Chitin-binding type-2 domain maps to 404–462 (VFHCHQEGFFRDKTYCAKYYECKKGDFGLEQTVHHCPNHSQAFDEVSRTCVDHAKIPGC). Cysteine 439 and cysteine 453 form a disulfide bridge.

This sequence belongs to the glycosyl hydrolase 18 family. Chitinase class II subfamily. Expressed in the peritrophic matrix of the midgut, and only very weakly in fecal pellets.

The protein resides in the secreted. Probably a non-catalytic chitinase-like protein, which binds to insoluble chitin and enhances the activity of the catalytic chitinases. Has weak chitin-binding activity. The polypeptide is Chitinase-like mite allergen Der p 18.0101 (Dermatophagoides pteronyssinus (European house dust mite)).